A 317-amino-acid chain; its full sequence is Acetyl-coenzyme A carboxylase carboxyl transferase subunit alpha (317 aa).

Residues 40-293 (LEKRSADALK…GDIITASLRS (254 aa)) enclose the CoA carboxyltransferase C-terminal domain.

This sequence belongs to the AccA family. As to quaternary structure, acetyl-CoA carboxylase is a heterohexamer composed of biotin carboxyl carrier protein (AccB), biotin carboxylase (AccC) and two subunits each of ACCase subunit alpha (AccA) and ACCase subunit beta (AccD).

Its subcellular location is the cytoplasm. It carries out the reaction N(6)-carboxybiotinyl-L-lysyl-[protein] + acetyl-CoA = N(6)-biotinyl-L-lysyl-[protein] + malonyl-CoA. It participates in lipid metabolism; malonyl-CoA biosynthesis; malonyl-CoA from acetyl-CoA: step 1/1. Functionally, component of the acetyl coenzyme A carboxylase (ACC) complex. First, biotin carboxylase catalyzes the carboxylation of biotin on its carrier protein (BCCP) and then the CO(2) group is transferred by the carboxyltransferase to acetyl-CoA to form malonyl-CoA. The polypeptide is Acetyl-coenzyme A carboxylase carboxyl transferase subunit alpha (Brucella anthropi (strain ATCC 49188 / DSM 6882 / CCUG 24695 / JCM 21032 / LMG 3331 / NBRC 15819 / NCTC 12168 / Alc 37) (Ochrobactrum anthropi)).